The sequence spans 348 residues: D-alanine--D-alanine ligase (348 aa).

Residues 132 to 334 (KRVLESAGIA…YPDLIEKLVA (203 aa)) form the ATP-grasp domain. Position 162–217 (162–217 (EEKLSYPVFTKPSNMGSSVGISKSDNQEELRASLDLAFKYDSRVLVEQGVTAREIE)) interacts with ATP. The Mg(2+) site is built by Asp-288, Glu-301, and Asn-303.

Belongs to the D-alanine--D-alanine ligase family. Mg(2+) serves as cofactor. Requires Mn(2+) as cofactor.

The protein resides in the cytoplasm. It carries out the reaction 2 D-alanine + ATP = D-alanyl-D-alanine + ADP + phosphate + H(+). The protein operates within cell wall biogenesis; peptidoglycan biosynthesis. Cell wall formation. In Streptococcus gordonii (strain Challis / ATCC 35105 / BCRC 15272 / CH1 / DL1 / V288), this protein is D-alanine--D-alanine ligase.